The following is a 138-amino-acid chain: Basic phospholipase A2 B (138 aa).

An N-terminal signal peptide occupies residues 1–16; it reads MRALWIVAVLLLGVEG. Intrachain disulfides connect Cys42-Cys131, Cys44-Cys60, Cys59-Cys111, Cys65-Cys138, Cys66-Cys104, Cys73-Cys97, and Cys91-Cys102. Ca(2+) is bound by residues Tyr43, Gly45, and Gly47. His63 is an active-site residue. Asp64 contributes to the Ca(2+) binding site. The active site involves Asp105.

This sequence belongs to the phospholipase A2 family. Group II subfamily. D49 sub-subfamily. Requires Ca(2+) as cofactor. In terms of tissue distribution, expressed by the venom gland.

The protein localises to the secreted. It catalyses the reaction a 1,2-diacyl-sn-glycero-3-phosphocholine + H2O = a 1-acyl-sn-glycero-3-phosphocholine + a fatty acid + H(+). Its function is as follows. Snake venom phospholipase A2 (PLA2) that shows potent hemolytic activity, and exhibits medium anticoagulant effects by binding to factor Xa (F10) and inhibiting the prothrombinase activity (IC(50) is 90 nM). It is one of the few phospholipases A2 capable of hydrolyzing the phospholipids of E.coli membranes in the presence of a bactericidal/permeability-increasing protein (BPI) of neutrophils. PLA2 catalyzes the calcium-dependent hydrolysis of the 2-acyl groups in 3-sn-phosphoglycerides. This chain is Basic phospholipase A2 B, found in Gloydius halys (Chinese water mocassin).